Reading from the N-terminus, the 161-residue chain is Spermidine N(1)-acetyltransferase (161 aa).

In terms of domain architecture, N-acetyltransferase spans 3–160; sequence IEIRKLSIED…SDFIMEKKYE (158 aa). Acetyl-CoA is bound by residues 92 to 94, 99 to 104, Asn131, and Ser136; these read LYL and THKKIG. The active-site Proton donor is the Tyr138. An acetyl-CoA-binding site is contributed by Lys140.

Belongs to the acetyltransferase family. As to quaternary structure, monomer or homodimer.

The enzyme catalyses an alkane-alpha,omega-diamine + acetyl-CoA = an N-acetylalkane-alpha,omega-diamine + CoA + H(+). Involved in the protection against polyamine toxicity by regulating their concentration. Could also be involved in the negative control of sporulation as well as production of degradative enzymes such as alpha-amylase, levansucrase and alkaline phosphatase. Catalyzes the transfer of an acetyl group from acetyl coenzyme A (AcCoA) to an acceptor substrate and release both CoA and the acetylated product. It can use a variety of substrates including spermidine, L-tryptophan, L-leucine, L-lysine, dopamine and tyramine. In Thermoplasma acidophilum (strain ATCC 25905 / DSM 1728 / JCM 9062 / NBRC 15155 / AMRC-C165), this protein is Spermidine N(1)-acetyltransferase.